Here is a 77-residue protein sequence, read N- to C-terminus: MKISQVFIFVFLLMISVAWANEAYEEESNYLSERFDADVEEITPEFRGIRCPKSWKCKAFKQRVLKRLLAMLRQHAF.

A signal peptide spans 1 to 20 (MKISQVFIFVFLLMISVAWA). A propeptide spanning residues 21–47 (NEAYEEESNYLSERFDADVEEITPEFR) is cleaved from the precursor. A disulfide bridge links C51 with C57.

In terms of tissue distribution, expressed by the venom gland.

The protein resides in the secreted. The protein localises to the target cell membrane. In terms of biological role, disrupts cell membranes through the formation of pores. Has antibacterial activity against Gram-positive bacteria S.aureus (MIC=10 uM) and B.subtilis (MIC=0.5 uM) as well as Gram-negative bacteria P.fluorescens (MIC=1 uM) and E.coli (MIC=0.5 uM). Has hemolytic activity against human erythrocytes (EC(50)=7 uM). The chain is Oxyopinin-4a from Oxyopes takobius (Lynx spider).